Reading from the N-terminus, the 410-residue chain is Zinc transporter ttm-1 (410 aa).

Composition is skewed to low complexity over residues 1–13 and 35–46; these read MTIS…SIRL and SVSSSDSGVSAD. Residues 1–94 are disordered; sequence MTISMISPSS…GAHKHSHDEK (94 aa). Over 1 to 103 the chain is Cytoplasmic; sequence MTISMISPSS…KYQKGRRAEK (103 aa). Basic residues predominate over residues 50-69; that stretch reads HHHHGHGHGHSHGGHGHSHT. Residues 104-124 form a helical membrane-spanning segment; it reads VLWAVAALSAVFIAAEFVGGF. The Extracellular portion of the chain corresponds to 125–129; sequence WAQSL. A helical transmembrane segment spans residues 130–150; the sequence is AIMTDAGHMLSDLLSFIISIF. The Cytoplasmic portion of the chain corresponds to 151–171; sequence AIRCARLPASKRLSFGYERAE. Residues 172–192 traverse the membrane as a helical segment; it reads VLGALTSVIILWVLTTVLVVV. Residues 193 to 208 lie on the Extracellular side of the membrane; the sequence is AIQRIVNNEHEVDADV. A helical membrane pass occupies residues 209–229; it reads MLITAGVGVLFNIVMGLVLHF. The Cytoplasmic portion of the chain corresponds to 230-258; that stretch reads GTGGHGHTHGGHSSHGHAHDGKNVNVRAA. Residues 259–279 form a helical membrane-spanning segment; the sequence is LIHVIGDLVQSIGVLIAALII. Position 280 (R280) is a topological domain, extracellular. The helical transmembrane segment at 281–301 threads the bilayer; that stretch reads FTGWTLADPICTFLFSIIVLF. Topologically, residues 302–410 are cytoplasmic; it reads TTVTVMRDIF…CDTCQQQETA (109 aa).

This sequence belongs to the cation diffusion facilitator (CDF) transporter (TC 2.A.4) family. SLC30A subfamily. Isoform a: Expressed in the hypodermis and the intestine. Isoform b: Expressed in the intestine, head neurons, seam cells, hypodermis, and the vulva.

It is found in the cytoplasmic vesicle membrane. The protein resides in the apical cell membrane. Promotes excretion of zinc from intestinal cells into the intestinal lumen in response to increased dietary zinc. Involved in cadmium resistance, possibly by promoting its transport from cells. Involved in resistance to B.thuringiensis pore-forming toxin Cry5B downstream of the sek-1 and pmk-1 MAPK kinase pathway. In Caenorhabditis elegans, this protein is Zinc transporter ttm-1.